We begin with the raw amino-acid sequence, 518 residues long: DNA-(apurinic or apyrimidinic site) endonuclease 2 (518 aa).

Mg(2+) is bound by residues asparagine 8 and glutamate 48. Tyrosine 156 is a catalytic residue. Positions 197, 199, 303, and 304 each coordinate Mg(2+). The active-site Proton donor/acceptor is the aspartate 197. The active-site Proton acceptor is histidine 304. The span at 355–405 shows a compositional bias: polar residues; the sequence is STLQHNNQTRVQTCQNKAQVRSTRPQPSQVGSSRGQKNLKSYFQPSPSCPQ. Residues 355–407 are disordered; sequence STLQHNNQTRVQTCQNKAQVRSTRPQPSQVGSSRGQKNLKSYFQPSPSCPQAS. A Glycyl lysine isopeptide (Lys-Gly) (interchain with G-Cter in ubiquitin) cross-link involves residue lysine 371. Residues 390–397 are required for the interaction and colocalization with PCNA in nuclear foci in presence of oxidative-induced DNA damaging agents; that stretch reads QKNLKSYF. Residues cysteine 469, histidine 472, cysteine 495, and cysteine 509 each contribute to the Zn(2+) site. The GRF-type zinc-finger motif lies at 469–518; that stretch reads CGGHREPCVMRTVKKPGPNLGRRFYMCARPRGPPTDPSSRCNFFLWSRPS.

Belongs to the DNA repair enzymes AP/ExoA family. As to quaternary structure, interacts with PCNA; this interaction is triggered by reactive oxygen species and increased by misincorporation of uracil in nuclear DNA. Requires Mg(2+) as cofactor. The cofactor is Mn(2+). Post-translationally, ubiquitinated by the CUL9-RBX1 complex. Ubiquitinated by MKRN3 at Lys-371 leading to proteasomal degradation. In terms of tissue distribution, highly expressed in brain and kidney. Weakly expressed in the fetal brain.

The protein resides in the nucleus. It is found in the cytoplasm. The protein localises to the mitochondrion. The catalysed reaction is Exonucleolytic cleavage in the 3'- to 5'-direction to yield nucleoside 5'-phosphates.. 3'-5' exonuclease activity is activated by sodium and manganese. 3'-5' exonuclease and 3'-phosphodiesterase activities are stimulated in presence of PCNA. In terms of biological role, functions as a weak apurinic/apyrimidinic (AP) endodeoxyribonuclease in the DNA base excision repair (BER) pathway of DNA lesions induced by oxidative and alkylating agents. Initiates repair of AP sites in DNA by catalyzing hydrolytic incision of the phosphodiester backbone immediately adjacent to the damage, generating a single-strand break with 5'-deoxyribose phosphate and 3'-hydroxyl ends. Also displays double-stranded DNA 3'-5' exonuclease, 3'-phosphodiesterase activities. Shows robust 3'-5' exonuclease activity on 3'-recessed heteroduplex DNA and is able to remove mismatched nucleotides preferentially. Also exhibits 3'-5' exonuclease activity on a single nucleotide gap containing heteroduplex DNA and on blunt-ended substrates. Shows fairly strong 3'-phosphodiesterase activity involved in the removal of 3'-damaged termini formed in DNA by oxidative agents. In the nucleus functions in the PCNA-dependent BER pathway. Plays a role in reversing blocked 3' DNA ends, problematic lesions that preclude DNA synthesis. Required for somatic hypermutation (SHM) and DNA cleavage step of class switch recombination (CSR) of immunoglobulin genes. Required for proper cell cycle progression during proliferation of peripheral lymphocytes. The protein is DNA-(apurinic or apyrimidinic site) endonuclease 2 (APEX2) of Homo sapiens (Human).